We begin with the raw amino-acid sequence, 511 residues long: ATP synthase subunit alpha (511 aa).

Gly-170–Thr-177 serves as a coordination point for ATP.

Belongs to the ATPase alpha/beta chains family. F-type ATPases have 2 components, CF(1) - the catalytic core - and CF(0) - the membrane proton channel. CF(1) has five subunits: alpha(3), beta(3), gamma(1), delta(1), epsilon(1). CF(0) has three main subunits: a(1), b(2) and c(9-12). The alpha and beta chains form an alternating ring which encloses part of the gamma chain. CF(1) is attached to CF(0) by a central stalk formed by the gamma and epsilon chains, while a peripheral stalk is formed by the delta and b chains.

The protein localises to the cell inner membrane. The enzyme catalyses ATP + H2O + 4 H(+)(in) = ADP + phosphate + 5 H(+)(out). Its function is as follows. Produces ATP from ADP in the presence of a proton gradient across the membrane. The alpha chain is a regulatory subunit. In Pelagibacter ubique (strain HTCC1062), this protein is ATP synthase subunit alpha.